The following is a 196-amino-acid chain: Large ribosomal subunit protein uL18 (196 aa).

This sequence belongs to the universal ribosomal protein uL18 family. In terms of assembly, part of the 50S ribosomal subunit. Contacts the 5S and 23S rRNAs.

In terms of biological role, this is one of the proteins that bind and probably mediate the attachment of the 5S RNA into the large ribosomal subunit, where it forms part of the central protuberance. The polypeptide is Large ribosomal subunit protein uL18 (Desulfurococcus amylolyticus (strain DSM 18924 / JCM 16383 / VKM B-2413 / 1221n) (Desulfurococcus kamchatkensis)).